The following is a 165-amino-acid chain: Yapsin-5 (165 aa).

The signal sequence occupies residues 1 to 24; sequence MQLFSILSLLSSLMCSLTVLGSSA. N-linked (GlcNAc...) asparagine glycosylation is present at asparagine 57. A Peptidase A1 domain is found at 67–165; that stretch reads YVVKMEIGTP…TRLSSMTYTY (99 aa).

The protein belongs to the peptidase A1 family.

In Saccharomyces cerevisiae (strain ATCC 204508 / S288c) (Baker's yeast), this protein is Yapsin-5 (YPS5).